Here is a 560-residue protein sequence, read N- to C-terminus: Dihydroxy-acid dehydratase (560 aa).

Cys52 is a [2Fe-2S] cluster binding site. Asp84 is a binding site for Mg(2+). [2Fe-2S] cluster is bound at residue Cys125. 2 residues coordinate Mg(2+): Asp126 and Lys127. N6-carboxylysine is present on Lys127. [2Fe-2S] cluster is bound at residue Cys197. Glu448 is a binding site for Mg(2+). The Proton acceptor role is filled by Ser474.

This sequence belongs to the IlvD/Edd family. As to quaternary structure, homodimer. The cofactor is [2Fe-2S] cluster. Requires Mg(2+) as cofactor.

The enzyme catalyses (2R)-2,3-dihydroxy-3-methylbutanoate = 3-methyl-2-oxobutanoate + H2O. It carries out the reaction (2R,3R)-2,3-dihydroxy-3-methylpentanoate = (S)-3-methyl-2-oxopentanoate + H2O. The protein operates within amino-acid biosynthesis; L-isoleucine biosynthesis; L-isoleucine from 2-oxobutanoate: step 3/4. It functions in the pathway amino-acid biosynthesis; L-valine biosynthesis; L-valine from pyruvate: step 3/4. In terms of biological role, functions in the biosynthesis of branched-chain amino acids. Catalyzes the dehydration of (2R,3R)-2,3-dihydroxy-3-methylpentanoate (2,3-dihydroxy-3-methylvalerate) into 2-oxo-3-methylpentanoate (2-oxo-3-methylvalerate) and of (2R)-2,3-dihydroxy-3-methylbutanoate (2,3-dihydroxyisovalerate) into 2-oxo-3-methylbutanoate (2-oxoisovalerate), the penultimate precursor to L-isoleucine and L-valine, respectively. The sequence is that of Dihydroxy-acid dehydratase from Leptospira borgpetersenii serovar Hardjo-bovis (strain JB197).